The chain runs to 286 residues: uncharacterized protein (286 aa).

In terms of domain architecture, HTH lysR-type spans methionine 1–threonine 58. The segment at residues methionine 18 to alanine 37 is a DNA-binding region (H-T-H motif).

This sequence belongs to the LysR transcriptional regulatory family.

This is an uncharacterized protein from Vibrio cholerae serotype O1 (strain ATCC 39315 / El Tor Inaba N16961).